A 469-amino-acid chain; its full sequence is Glutamine synthetase (469 aa).

Residues 15-96 (NDVKFIDVRF…INFFIHDPIT (82 aa)) form the GS beta-grasp domain. One can recognise a GS catalytic domain in the interval 104-469 (PRNIAKKAEA…PHEFELYFDI (366 aa)). E129 and E131 together coordinate Mg(2+). Residue E205 coordinates ATP. Residues E210 and E218 each coordinate Mg(2+). 221–223 (YKF) serves as a coordination point for ATP. L-glutamate is bound by residues 262 to 263 (NG) and G263. H267 is a Mg(2+) binding site. ATP is bound by residues 269–271 (HQS) and S271. The L-glutamate site is built by R320, E326, and R338. R338, R343, and K352 together coordinate ATP. Mg(2+) is bound at residue E357. Position 359 (R359) interacts with L-glutamate. O-AMP-tyrosine is present on Y397.

Belongs to the glutamine synthetase family. As to quaternary structure, oligomer of 12 subunits arranged in the form of two hexagons. Mg(2+) is required as a cofactor.

Its subcellular location is the cytoplasm. The enzyme catalyses L-glutamate + NH4(+) + ATP = L-glutamine + ADP + phosphate + H(+). Its activity is regulated as follows. The activity of this enzyme could be controlled by adenylation under conditions of abundant glutamine. In terms of biological role, catalyzes the ATP-dependent biosynthesis of glutamine from glutamate and ammonia. The chain is Glutamine synthetase from Streptomyces filamentosus (Streptomyces roseosporus).